The primary structure comprises 379 residues: Cytochrome b (379 aa).

4 helical membrane passes run 33–53, 77–98, 113–133, and 178–198; these read FGSL…FLAM, WILR…YIHV, WNIG…GYVL, and FFAF…VHLL. 2 residues coordinate heme b: histidine 83 and histidine 97. Heme b contacts are provided by histidine 182 and histidine 196. Histidine 201 contacts a ubiquinone. 4 consecutive transmembrane segments (helical) span residues 226–246, 288–308, 320–340, and 347–367; these read IKDI…VLFS, LGGV…PVLH, LSQC…WIGG, and YVIX…XXXX.

Belongs to the cytochrome b family. In terms of assembly, the cytochrome bc1 complex contains 11 subunits: 3 respiratory subunits (MT-CYB, CYC1 and UQCRFS1), 2 core proteins (UQCRC1 and UQCRC2) and 6 low-molecular weight proteins (UQCRH/QCR6, UQCRB/QCR7, UQCRQ/QCR8, UQCR10/QCR9, UQCR11/QCR10 and a cleavage product of UQCRFS1). This cytochrome bc1 complex then forms a dimer. The cofactor is heme b.

The protein localises to the mitochondrion inner membrane. Its function is as follows. Component of the ubiquinol-cytochrome c reductase complex (complex III or cytochrome b-c1 complex) that is part of the mitochondrial respiratory chain. The b-c1 complex mediates electron transfer from ubiquinol to cytochrome c. Contributes to the generation of a proton gradient across the mitochondrial membrane that is then used for ATP synthesis. This Myotis goudotii (Malagasy mouse-eared bat) protein is Cytochrome b (MT-CYB).